The chain runs to 221 residues: Chaperone protein TorD (221 aa).

It belongs to the TorD/DmsD family. TorD subfamily.

Its subcellular location is the cytoplasm. Functionally, involved in the biogenesis of TorA. Acts on TorA before the insertion of the molybdenum cofactor and, as a result, probably favors a conformation of the apoenzyme that is competent for acquiring the cofactor. This chain is Chaperone protein TorD, found in Shewanella pealeana (strain ATCC 700345 / ANG-SQ1).